A 96-amino-acid chain; its full sequence is Aspartyl/glutamyl-tRNA(Asn/Gln) amidotransferase subunit C (96 aa).

This sequence belongs to the GatC family. Heterotrimer of A, B and C subunits.

It catalyses the reaction L-glutamyl-tRNA(Gln) + L-glutamine + ATP + H2O = L-glutaminyl-tRNA(Gln) + L-glutamate + ADP + phosphate + H(+). The catalysed reaction is L-aspartyl-tRNA(Asn) + L-glutamine + ATP + H2O = L-asparaginyl-tRNA(Asn) + L-glutamate + ADP + phosphate + 2 H(+). Functionally, allows the formation of correctly charged Asn-tRNA(Asn) or Gln-tRNA(Gln) through the transamidation of misacylated Asp-tRNA(Asn) or Glu-tRNA(Gln) in organisms which lack either or both of asparaginyl-tRNA or glutaminyl-tRNA synthetases. The reaction takes place in the presence of glutamine and ATP through an activated phospho-Asp-tRNA(Asn) or phospho-Glu-tRNA(Gln). In Bacillus licheniformis (strain ATCC 14580 / DSM 13 / JCM 2505 / CCUG 7422 / NBRC 12200 / NCIMB 9375 / NCTC 10341 / NRRL NRS-1264 / Gibson 46), this protein is Aspartyl/glutamyl-tRNA(Asn/Gln) amidotransferase subunit C.